The sequence spans 83 residues: Beta-defensin 119 (83 aa).

The first 20 residues, 1–20, serve as a signal peptide directing secretion; sequence MKFLFLFLAILLAMEPVVSG. 3 cysteine pairs are disulfide-bonded: Cys27–Cys54, Cys34–Cys48, and Cys38–Cys55.

Belongs to the beta-defensin family.

The protein localises to the secreted. Has antibacterial activity. The sequence is that of Beta-defensin 119 (DEFB119) from Bos taurus (Bovine).